The chain runs to 432 residues: Gamma-glutamyl phosphate reductase (432 aa).

It belongs to the gamma-glutamyl phosphate reductase family.

The protein resides in the cytoplasm. It catalyses the reaction L-glutamate 5-semialdehyde + phosphate + NADP(+) = L-glutamyl 5-phosphate + NADPH + H(+). It functions in the pathway amino-acid biosynthesis; L-proline biosynthesis; L-glutamate 5-semialdehyde from L-glutamate: step 2/2. Functionally, catalyzes the NADPH-dependent reduction of L-glutamate 5-phosphate into L-glutamate 5-semialdehyde and phosphate. The product spontaneously undergoes cyclization to form 1-pyrroline-5-carboxylate. The protein is Gamma-glutamyl phosphate reductase of Corynebacterium glutamicum (strain R).